The following is a 101-amino-acid chain: NAD(P)H-quinone oxidoreductase subunit 4L, chloroplastic (101 aa).

Transmembrane regions (helical) follow at residues 2 to 22 (MFEHVLFLSVYLFSIGIYGLI), 32 to 52 (ICLELILNSINLNLVTFSDLF), and 61 to 81 (IFAIFVIALAAAEAAIGLSIL).

It belongs to the complex I subunit 4L family. As to quaternary structure, NDH is composed of at least 16 different subunits, 5 of which are encoded in the nucleus.

It is found in the plastid. It localises to the chloroplast thylakoid membrane. The enzyme catalyses a plastoquinone + NADH + (n+1) H(+)(in) = a plastoquinol + NAD(+) + n H(+)(out). It carries out the reaction a plastoquinone + NADPH + (n+1) H(+)(in) = a plastoquinol + NADP(+) + n H(+)(out). NDH shuttles electrons from NAD(P)H:plastoquinone, via FMN and iron-sulfur (Fe-S) centers, to quinones in the photosynthetic chain and possibly in a chloroplast respiratory chain. The immediate electron acceptor for the enzyme in this species is believed to be plastoquinone. Couples the redox reaction to proton translocation, and thus conserves the redox energy in a proton gradient. This Agrostis stolonifera (Creeping bentgrass) protein is NAD(P)H-quinone oxidoreductase subunit 4L, chloroplastic.